Consider the following 285-residue polypeptide: MQLCGFDVGLDQRFFLIAGTCSIEGLEMSLDVAGQLKEACAPLGIPLIYKGSFDKANRSSGTSKRGVGLDAGLKILDEVRRQLQLPILTDVHDTSHVAEVASVVDVLQTPAFLCRQTDFIRAVAQSGKPVNIKKGQFLAPWDMKNVIDKARAAAREVGLSEDRFLACERGVSFGYNNLVADMTSLAEMRNSGAPVVFDVTHSVQKPGGLGAVSGGARDMVPVLARAGVAVGVAGLFMETHPKPAEAWSDGPNAVPLKHMRALLETLVALDDVTKKNGFLENNFGA.

The protein belongs to the KdsA family.

The protein resides in the cytoplasm. It catalyses the reaction D-arabinose 5-phosphate + phosphoenolpyruvate + H2O = 3-deoxy-alpha-D-manno-2-octulosonate-8-phosphate + phosphate. Its pathway is carbohydrate biosynthesis; 3-deoxy-D-manno-octulosonate biosynthesis; 3-deoxy-D-manno-octulosonate from D-ribulose 5-phosphate: step 2/3. It functions in the pathway bacterial outer membrane biogenesis; lipopolysaccharide biosynthesis. The polypeptide is 2-dehydro-3-deoxyphosphooctonate aldolase (Acidovorax sp. (strain JS42)).